A 362-amino-acid chain; its full sequence is 3-dehydroquinate synthase (362 aa).

The protein belongs to the archaeal-type DHQ synthase family.

The enzyme catalyses 2-amino-2,3,7-trideoxy-D-lyxo-hept-6-ulosonate + NAD(+) + H2O = 3-dehydroquinate + NH4(+) + NADH + H(+). Functionally, catalyzes the oxidative deamination and cyclization of 2-amino-3,7-dideoxy-D-threo-hept-6-ulosonic acid (ADH) to yield 3-dehydroquinate (DHQ), which is fed into the canonical shikimic pathway of aromatic amino acid biosynthesis. In Methanococcus aeolicus (strain ATCC BAA-1280 / DSM 17508 / OCM 812 / Nankai-3), this protein is 3-dehydroquinate synthase.